Reading from the N-terminus, the 293-residue chain is D-alanine--D-alanine ligase (293 aa).

An ATP-grasp domain is found at 98 to 291 (KIIWKQHNLT…FNKLVVAIIN (194 aa)). 124-177 (DFPLPWMVKPTLEGSSIGISKVDSQIQLNNALMLAWQYNSHALIEQWIEGDEYT) serves as a coordination point for ATP. Residues Asp-245, Glu-258, and Asn-260 each contribute to the Mg(2+) site.

It belongs to the D-alanine--D-alanine ligase family. Requires Mg(2+) as cofactor. It depends on Mn(2+) as a cofactor.

It localises to the cytoplasm. The catalysed reaction is 2 D-alanine + ATP = D-alanyl-D-alanine + ADP + phosphate + H(+). Its pathway is cell wall biogenesis; peptidoglycan biosynthesis. Its function is as follows. Cell wall formation. This chain is D-alanine--D-alanine ligase, found in Ruthia magnifica subsp. Calyptogena magnifica.